Here is a 301-residue protein sequence, read N- to C-terminus: D-alanine--D-alanine ligase A (301 aa).

An ATP-grasp domain is found at 99 to 293 (KRILAFGNVR…FEELLDTIIE (195 aa)). An ATP-binding site is contributed by 126–181 (IENLGYPVFVKPNNGGSSVATTLVESKEAVKDAVLEALKYDTEVMIEEYIKGDEIT). Residues Asp248, Glu260, and Asn262 each contribute to the Mg(2+) site.

Belongs to the D-alanine--D-alanine ligase family. Requires Mg(2+) as cofactor. The cofactor is Mn(2+).

The protein localises to the cytoplasm. It carries out the reaction 2 D-alanine + ATP = D-alanyl-D-alanine + ADP + phosphate + H(+). Its pathway is cell wall biogenesis; peptidoglycan biosynthesis. Its function is as follows. Cell wall formation. In Clostridium perfringens (strain 13 / Type A), this protein is D-alanine--D-alanine ligase A.